The primary structure comprises 350 residues: Renin receptor (350 aa).

A signal peptide spans 1 to 17 (MAVLVVLLFFLVAGALG). Over 18-302 (NEFSILRSPG…YNLAYKYNLE (285 aa)) the chain is Extracellular. Residues 303-323 (YSVVFNLVLWIMIGLALAVII) form a helical membrane-spanning segment. At 324–350 (TSYNIWNMDPGYDSIIYRMTNQKIRID) the chain is on the cytoplasmic side. Residues 346 to 350 (KIRID) carry the Mediates retrograde transport to the ER motif.

In terms of assembly, interacts with renin. Accessory component of the multisubunit proton-transporting vacuolar (V)-ATPase protein pump. Interacts (via N-terminus) with ATP6AP1 (via N-terminus). Interacts with ATP6V0D1; ATP6V0D1 is a V-ATPase complex subunit and the interaction promotes V-ATPase complex assembly. Interacts with TMEM9; TMEM9 is a V-ATPase assembly regulator and the interaction induces the interaction with ATP6V0D1. Interacts with VMA21 (via N-terminus); VMA21 is a V-ATPase accessory component. Phosphorylated. Post-translationally, proteolytically cleaved by a furin-like convertase in the trans-Golgi network to generate N- and C-terminal fragments. Expressed in glutamatergic and GABAergic neurons with highest levels in the cortex, the hippocampus, the medial habenular nucleus, the cerebellum, the medulla and the olfactory bulb (at protein level).

Its subcellular location is the endoplasmic reticulum membrane. The protein localises to the lysosome membrane. It is found in the cytoplasmic vesicle. It localises to the autophagosome membrane. The protein resides in the cell projection. Its subcellular location is the dendritic spine membrane. The protein localises to the axon. It is found in the endosome membrane. It localises to the clathrin-coated vesicle membrane. The protein resides in the secretory vesicle. Its subcellular location is the synaptic vesicle membrane. Multifunctional protein which functions as a renin, prorenin cellular receptor and is involved in the assembly of the lysosomal proton-transporting V-type ATPase (V-ATPase) and the acidification of the endo-lysosomal system. May mediate renin-dependent cellular responses by activating ERK1 and ERK2. By increasing the catalytic efficiency of renin in AGT/angiotensinogen conversion to angiotensin I, may also play a role in the renin-angiotensin system (RAS). Through its function in V-type ATPase (v-ATPase) assembly and acidification of the lysosome it regulates protein degradation and may control different signaling pathways important for proper brain development, synapse morphology and synaptic transmission. The polypeptide is Renin receptor (Mus musculus (Mouse)).